Reading from the N-terminus, the 447-residue chain is Tubulin beta-2 chain (447 aa).

Gln-9, Glu-67, Ser-136, Gly-140, Thr-141, Gly-142, Asn-202, and Asn-224 together coordinate GTP. Glu-67 lines the Mg(2+) pocket. The span at 411-425 (SNMNDLVSEYQQYQD) shows a compositional bias: polar residues. The interval 411-447 (SNMNDLVSEYQQYQDATAEEDEYEEEEEDYHQEHDEM) is disordered. Residues 427–440 (TAEEDEYEEEEEDY) are compositionally biased toward acidic residues.

It belongs to the tubulin family. In terms of assembly, dimer of alpha and beta chains. A typical microtubule is a hollow water-filled tube with an outer diameter of 25 nm and an inner diameter of 15 nM. Alpha-beta heterodimers associate head-to-tail to form protofilaments running lengthwise along the microtubule wall with the beta-tubulin subunit facing the microtubule plus end conferring a structural polarity. Microtubules usually have 13 protofilaments but different protofilament numbers can be found in some organisms and specialized cells. It depends on Mg(2+) as a cofactor.

Its subcellular location is the cytoplasm. It localises to the cytoskeleton. Tubulin is the major constituent of microtubules, a cylinder consisting of laterally associated linear protofilaments composed of alpha- and beta-tubulin heterodimers. Microtubules grow by the addition of GTP-tubulin dimers to the microtubule end, where a stabilizing cap forms. Below the cap, tubulin dimers are in GDP-bound state, owing to GTPase activity of alpha-tubulin. The polypeptide is Tubulin beta-2 chain (TUBB2) (Pisum sativum (Garden pea)).